Here is a 158-residue protein sequence, read N- to C-terminus: GAF domain-containing protein A (158 aa).

Residues 32–158 (NQIANLANVT…LTQILKLLDN (127 aa)) form the GAF domain.

Belongs to the free Met sulfoxide reductase family.

In Dictyostelium discoideum (Social amoeba), this protein is GAF domain-containing protein A (gafA).